The following is a 255-amino-acid chain: Probable membrane transporter protein HI_0198 (255 aa).

The next 8 membrane-spanning stretches (helical) occupy residues 7 to 27, 28 to 48, 76 to 96, 99 to 119, 132 to 152, 153 to 173, 191 to 211, and 235 to 255; these read LLAI…IAGG, GGLI…MALG, IWFI…LIQS, VAIF…YFLF, LSYL…DGFF, GPGT…FNLP, FALF…MMAG, and VVIM…WFHF.

It belongs to the 4-toluene sulfonate uptake permease (TSUP) (TC 2.A.102) family.

The protein localises to the cell membrane. The chain is Probable membrane transporter protein HI_0198 from Haemophilus influenzae (strain ATCC 51907 / DSM 11121 / KW20 / Rd).